A 360-amino-acid polypeptide reads, in one-letter code: MSQGRGKYDFYIGLGLAMSSSIFIGGSFILKKKGLLRLARKGSMRAGQGGHAYLKEWLWWAGLLSMGAGEVANFAAYAFAPATLVTPLGALSVLVSAILSSYFLNERLNLHGKIGCLLSILGSTVMVIHAPKEEEIETLNEMSHKLGDPGFVVFATLVVIVALILIFVVGPRHGQTNILVYITICSVIGAFSVSCVKGLGIAIKELFAGKPVLRHPLAWILLLSLIVCVSTQINYLNRALDIFNTSIVTPIYYVFFTTSVLTCSAILFKEWQDMPVDDVIGTLSGFFTIIVGIFLLHAFKDVSFSLASLPVSFRKDEKAMNGNLSNMYEVLNNNEESLTCGIEQHTGENVSRRNGNLTAF.

Residues 1–9 lie on the Extracellular side of the membrane; that stretch reads MSQGRGKYD. Residues 10 to 30 traverse the membrane as a helical segment; the sequence is FYIGLGLAMSSSIFIGGSFIL. Residues 31–56 lie on the Cytoplasmic side of the membrane; it reads KKKGLLRLARKGSMRAGQGGHAYLKE. A helical transmembrane segment spans residues 57 to 77; sequence WLWWAGLLSMGAGEVANFAAY. Position 78 (Ala78) is a topological domain, extracellular. Residues 79-99 traverse the membrane as a helical segment; it reads FAPATLVTPLGALSVLVSAIL. Residues 100 to 107 are Cytoplasmic-facing; sequence SSYFLNER. Residues 108–128 traverse the membrane as a helical segment; that stretch reads LNLHGKIGCLLSILGSTVMVI. The Extracellular segment spans residues 129 to 149; sequence HAPKEEEIETLNEMSHKLGDP. A helical transmembrane segment spans residues 150–170; sequence GFVVFATLVVIVALILIFVVG. Residues 171 to 175 are Cytoplasmic-facing; the sequence is PRHGQ. The chain crosses the membrane as a helical span at residues 176 to 196; it reads TNILVYITICSVIGAFSVSCV. Topologically, residues 197–215 are extracellular; sequence KGLGIAIKELFAGKPVLRH. Residues 216–236 traverse the membrane as a helical segment; sequence PLAWILLLSLIVCVSTQINYL. The Cytoplasmic segment spans residues 237-246; it reads NRALDIFNTS. Residues 247–267 traverse the membrane as a helical segment; the sequence is IVTPIYYVFFTTSVLTCSAIL. Topologically, residues 268–278 are extracellular; the sequence is FKEWQDMPVDD. Residues 279–299 form a helical membrane-spanning segment; that stretch reads VIGTLSGFFTIIVGIFLLHAF. Residues 300–360 lie on the Cytoplasmic side of the membrane; sequence KDVSFSLASL…SRRNGNLTAF (61 aa).

The protein belongs to the NIPA family. Widely expressed.

The protein resides in the cell membrane. The protein localises to the early endosome. The catalysed reaction is Mg(2+)(in) = Mg(2+)(out). Its function is as follows. Acts as a selective Mg(2+) transporter. This is Magnesium transporter NIPA2 (NIPA2) from Homo sapiens (Human).